The following is an 887-amino-acid chain: MPVRKKHGPYDIIADDVYDCRIPLHNELAYQHGIHFEAKYVGSMEIPRPGTRIEIVAAMRRVRYEFKARGIKKRPVDITVSVDGVKVVLQRKKQKEKGLSWDESKLLVMFHPIYRIFYVSHDSQDLQIFSYIARDGASNTFKCNVFKCSKKSQAMRVVRTIGQAFEVCHKVAQDQMQEKHEDEAAKSKISMQSEDEAGPNALDVIEERGGREEDSRSSSPMEAPPVGGPLYGKRLSLFQPRKPSTTSSSGGTAIDTTAIPENVLEIPNTSHPILQPKAPELVPQLQPQTALPYQQKPQSLLNIQQQQFNTLPSQMPSTQTLPSLSENPGQSHIPRMMTMPPNMPYPTATLPHPRTWAPQIPSYPNSMQSLEQNVPMYYPQMPGMLPSSSSLPFGLSSPVMVSPYATLQLNMQSQQLDQPDHSGSQITMDQYNQQLMRSQLDQAQQSVQVAGCQVQLLRDQLTSETTARLEAQSRTHQLLSANRDLLEQVQNLVSRLQMLETKITSEIHHSSSQPPQHQPIYQPSTSTPLNPKMPLSIDHNDPRIPGNSSIRLNYPYQVQPLADLRAGSLPPVKESKERRKDEGTRTEPESNAEDTTDYSSSDQYERTSNVMKPSHFNILMSNPLVDINVPSGAAMSSRMEQFDMGDTPGTSSTPPKKEKKPSSGILRGENFSRMSFNPKLGREKEREQQQLMFEDTLEDDSPRSIPPSPPSKARNTTIDSLFKPQDDPPTIADREPQQLPPQPSQQNQKKNTAVNLLMPTMPASSSLVTAMYPPMRQPAVPVNKIQPKVDVFRKKTLKTLSMDIAEEPEPSEMDPNRNNLPSSTNSSMKRRGFLPPPNTDVEIKEIEDYINRNVDRSKLPETSLLTRLTRQAQGDNSLGNLPNGYPQ.

The 168-residue stretch at 30 to 197 folds into the PID domain; it reads YQHGIHFEAK…KISMQSEDEA (168 aa). 2 stretches are compositionally biased toward basic and acidic residues: residues 176-186 and 205-216; these read MQEKHEDEAAK and IEERGGREEDSR. Disordered regions lie at residues 176-254, 506-606, 641-753, 804-839, and 853-887; these read MQEK…GTAI, EIHH…QYER, QFDM…KNTA, IAEE…PPNT, and NVDR…GYPQ. Residues 242 to 254 are compositionally biased toward polar residues; sequence KPSTTSSSGGTAI. Residues 434–506 are a coiled coil; sequence QLMRSQLDQA…QMLETKITSE (73 aa). Residues 510–519 are compositionally biased toward low complexity; sequence SSSQPPQHQP. The segment covering 573–588 has biased composition (basic and acidic residues); that stretch reads KESKERRKDEGTRTEP. The segment covering 597-606 has biased composition (polar residues); the sequence is DYSSSDQYER. Composition is skewed to polar residues over residues 816-827 and 863-887; these read NRNNLPSSTNSS and SLLT…GYPQ.

Component of the dystrophin glycoprotein complex (DGC). Interacts with zyx-1. Expressed in muscles of the head, body wall and vulva. In some animals, weaker expression is observed in the intestinal muscles (at protein level). Isoform a is expressed in lateral neurons SDQL and SDQR.

Functionally, together with dys-1 and hlh-1, participates in a common muscular function. The polypeptide is Dystrophin-like protein 1 (Caenorhabditis elegans).